Here is a 622-residue protein sequence, read N- to C-terminus: Galactolipid galactosyltransferase SFR2, chloroplastic (622 aa).

At 1–3 the chain is on the stromal side; the sequence is MEL. The helical; Signal-anchor transmembrane segment at 4-24 threads the bilayer; sequence FALLIKVAGLLATVTVGANVV. Residues 25–622 are Cytoplasmic-facing; that stretch reads SYSRFRRQNL…LHPALASPFD (598 aa). Residues His-222, 266–267, Tyr-377, Glu-429, Trp-467, 474–475, and Phe-483 each bind a beta-D-glucoside; these read NE and EW. Catalysis depends on Glu-267, which acts as the Proton donor. The active-site Nucleophile is Glu-429.

This sequence belongs to the glycosyl hydrolase 1 family. In terms of tissue distribution, expressed in hypocotyls, cotyledons, stems, leaves, pedicels, sepals, anthers and pistils. Limited expression in roots. Not detected in petals or filaments.

The protein localises to the plastid. Its subcellular location is the chloroplast. It localises to the chloroplast outer membrane. It catalyses the reaction 2 a 1,2-diacyl-3-O-(beta-D-galactosyl)-sn-glycerol = a 1,2-diacyl-3-O-[beta-D-galactosyl-(1-&gt;6)-beta-D-galactosyl]-sn-glycerol + a 1,2-diacyl-sn-glycerol. Its activity is regulated as follows. Induced by MgCl(2). Glycosyl hydrolase family protein acting primarily as a highly specific galactosyltransferase. Synthesizes digalactosyldiacylglycerol from monogalactosyldiacylglycerol in the absence of UDP-galactose in vitro. Hydrolyzes o- and p-nitrophenyl beta-D-glucoside in vitro. Plays a role in freezing tolerance. May play a role in chloroplast protection. This is Galactolipid galactosyltransferase SFR2, chloroplastic from Arabidopsis thaliana (Mouse-ear cress).